We begin with the raw amino-acid sequence, 345 residues long: Dihydroorotate dehydrogenase (quinone) (345 aa).

Residues 65–69 (AGLDK) and Thr89 each bind FMN. Lys69 provides a ligand contact to substrate. Substrate is bound at residue 114–118 (NRMGF). Residues Asn146 and Asn179 each coordinate FMN. Asn179 is a binding site for substrate. Residue Ser182 is the Nucleophile of the active site. Asn184 contacts substrate. FMN contacts are provided by Lys224 and Thr252. 253 to 254 (NT) serves as a coordination point for substrate. FMN is bound by residues Gly275, Gly304, and 325 to 326 (YT).

It belongs to the dihydroorotate dehydrogenase family. Type 2 subfamily. As to quaternary structure, monomer. FMN is required as a cofactor.

Its subcellular location is the cell membrane. It catalyses the reaction (S)-dihydroorotate + a quinone = orotate + a quinol. It participates in pyrimidine metabolism; UMP biosynthesis via de novo pathway; orotate from (S)-dihydroorotate (quinone route): step 1/1. Functionally, catalyzes the conversion of dihydroorotate to orotate with quinone as electron acceptor. In Janthinobacterium sp. (strain Marseille) (Minibacterium massiliensis), this protein is Dihydroorotate dehydrogenase (quinone).